The primary structure comprises 163 residues: Photosystem II extrinsic protein V (163 aa).

The N-terminal stretch at Met1–Ala26 is a signal peptide. Heme c is bound by residues Cys63, Cys66, His67, and His118.

Belongs to the cytochrome c family. PsbV subfamily. As to quaternary structure, PSII is composed of 1 copy each of membrane proteins PsbA, PsbB, PsbC, PsbD, PsbE, PsbF, PsbH, PsbI, PsbJ, PsbK, PsbL, PsbM, PsbT, PsbX, PsbY, PsbZ, Psb30/Ycf12, peripheral proteins PsbO, CyanoQ (PsbQ), PsbU, PsbV and a large number of cofactors. It forms dimeric complexes. Heme c serves as cofactor.

It is found in the cellular thylakoid membrane. In terms of biological role, one of the extrinsic, lumenal subunits of photosystem II (PSII). PSII is a light-driven water plastoquinone oxidoreductase, using light energy to abstract electrons from H(2)O, generating a proton gradient subsequently used for ATP formation. The extrinsic proteins stabilize the structure of photosystem II oxygen-evolving complex (OEC), the ion environment of oxygen evolution and protect the OEC against heat-induced inactivation. Low-potential cytochrome c that plays a role in the OEC of PSII. In Nostoc sp. (strain PCC 7120 / SAG 25.82 / UTEX 2576), this protein is Photosystem II extrinsic protein V.